Consider the following 240-residue polypeptide: 4-hydroxy-tetrahydrodipicolinate reductase (240 aa).

Position 7-12 (7-12 (GLSGTM)) interacts with NAD(+). Position 35 (lysine 35) interacts with NADP(+). Residues 74-76 (GTT) and 98-101 (ATNM) contribute to the NAD(+) site. Histidine 131 serves as the catalytic Proton donor/acceptor. Histidine 132 is a binding site for (S)-2,3,4,5-tetrahydrodipicolinate. The active-site Proton donor is lysine 135. 141–142 (GS) is a (S)-2,3,4,5-tetrahydrodipicolinate binding site.

The protein belongs to the DapB family.

It is found in the cytoplasm. It catalyses the reaction (S)-2,3,4,5-tetrahydrodipicolinate + NAD(+) + H2O = (2S,4S)-4-hydroxy-2,3,4,5-tetrahydrodipicolinate + NADH + H(+). It carries out the reaction (S)-2,3,4,5-tetrahydrodipicolinate + NADP(+) + H2O = (2S,4S)-4-hydroxy-2,3,4,5-tetrahydrodipicolinate + NADPH + H(+). The protein operates within amino-acid biosynthesis; L-lysine biosynthesis via DAP pathway; (S)-tetrahydrodipicolinate from L-aspartate: step 4/4. In terms of biological role, catalyzes the conversion of 4-hydroxy-tetrahydrodipicolinate (HTPA) to tetrahydrodipicolinate. This is 4-hydroxy-tetrahydrodipicolinate reductase from Alkaliphilus metalliredigens (strain QYMF).